A 250-amino-acid chain; its full sequence is Virulence plasmid protein pGP6-D-related protein (250 aa).

Belongs to the UPF0137 (pGP6-D) family.

This chain is Virulence plasmid protein pGP6-D-related protein, found in Chlamydia pneumoniae (Chlamydophila pneumoniae).